Here is a 666-residue protein sequence, read N- to C-terminus: Endogenous retrovirus group K member 19 Gag polyprotein (666 aa).

Gly-2 carries the N-myristoyl glycine lipid modification. 2 disordered regions span residues 170–189 (LVGP…AGQV) and 223–264 (PLES…GSEL). The segment covering 232–247 (GMPPAPQGRAPYPQPP) has biased composition (pro residues). 2 consecutive CCHC-type zinc fingers follow at residues 544–561 (GKCY…NCPV) and 580–597 (DLCP…QCRS). The disordered stretch occupies residues 598 to 640 (KFDKNGQPLSGNEQRGQPQAPQQTGAFPIQPFVPHGFQGQQPP). Over residues 604-622 (QPLSGNEQRGQPQAPQQTG) the composition is skewed to polar residues.

This sequence belongs to the beta type-B retroviral Gag protein family. HERV class-II K(HML-2) gag subfamily. Myristoylation is essential for retroviral assembly. Alteration of the glycine residue leads to a block in the budding of particles and an accumulation of Gag inside the cell. In terms of processing, specific enzymatic cleavages may yield mature proteins.

It is found in the cell membrane. Functionally, the products of the Gag polyproteins of infectious retroviruses perform highly complex orchestrated tasks during the assembly, budding, maturation, and infection stages of the viral replication cycle. During viral assembly, the proteins form membrane associations and self-associations that ultimately result in budding of an immature virion from the infected cell. Gag precursors also function during viral assembly to selectively bind and package two plus strands of genomic RNA. Endogenous Gag proteins may have kept, lost or modified their original function during evolution. The chain is Endogenous retrovirus group K member 19 Gag polyprotein (ERVK-19) from Homo sapiens (Human).